We begin with the raw amino-acid sequence, 905 residues long: V-type proton ATPase 116 kDa subunit a 1 (905 aa).

The Cytoplasmic portion of the chain corresponds to 1-424; sequence MGDYVTPGEE…DAYGIATYRE (424 aa). A helical membrane pass occupies residues 425 to 443; the sequence is INPAPYTMISFPFLFAVMF. Topologically, residues 444-445 are lumenal; the sequence is GD. The chain crosses the membrane as a helical span at residues 446 to 462; that stretch reads MGHGAIMLLAALFFILK. Over 463-477 the chain is Cytoplasmic; the sequence is EKQLEAARIKDEIFQ. A helical membrane pass occupies residues 478 to 507; the sequence is TFFGGRYVIFLMGAFSIYTGFMYNDVFSKS. The Lumenal portion of the chain corresponds to 508–572; that stretch reads INTFGSSWQN…EGNKLSFLNS (65 aa). Residues 573–592 traverse the membrane as a helical segment; it reads MKMKMSVLFGIAQMTFGVLL. Over 593–610 the chain is Cytoplasmic; sequence SYQNFIYFKSDLDIKYMF. The chain crosses the membrane as a helical span at residues 611–631; sequence IPQMIFLSSIFIYLCIQILSK. Residues 632 to 699 are Lumenal-facing; sequence WLFFGAVGGT…YPGQATIEII (68 aa). A helical membrane pass occupies residues 700–719; it reads LVVLALVQVPIMLFAKPYFL. Residues 720–788 are Cytoplasmic-facing; it reads YRRDKQQSRY…DVMVYQAIHT (69 aa). Residues 789 to 813 traverse the membrane as a helical segment; it reads IEFVLGCVSHTASYLRLWALSLAHA. At 814–834 the chain is on the lumenal side; the sequence is QLSDVLWTMVFRNAFVLDGYT. Residues 835-873 traverse the membrane as a helical segment; that stretch reads GAIATYILFFIFGSLSVFILVLMEGLSAFLHALRLHWVE. Over 874–905 the chain is Cytoplasmic; that stretch reads FQSKFYGGLGYEFAPFSFEKILAEEREAEENL.

This sequence belongs to the V-ATPase 116 kDa subunit family. In terms of assembly, V-ATPase is a heteromultimeric enzyme made up of two complexes: the ATP-hydrolytic V1 complex and the proton translocation V0 complex. The V1 complex consists of three catalytic AB heterodimers that form a heterohexamer, three peripheral stalks each consisting of EG heterodimers, one central rotor including subunits D and F, and the regulatory subunits C and H. The proton translocation complex V0 consists of the proton transport subunit a, a ring of proteolipid subunits c9c'', rotary subunit d, subunits e and f, and the accessory subunits vah-19/Ac45 and vah-20/PRR. Interacts with V-type proton ATPase subunit C vha-11. As to expression, ubiquitous expression in embryos. Expressed in gonads, intestine, neurons in the head and motoneurons in the ventral cord of larvae and adults. Expressed in the vulvae and spermathecal uterine valves. Weakly expressed in the pharynx. Specifically expressed in the nervous system.

The protein resides in the membrane. Its function is as follows. Subunit of the V0 complex of vacuolar(H+)-ATPase (V-ATPase), a multisubunit enzyme composed of a peripheral complex (V1) that hydrolyzes ATP and a membrane integral complex (V0) that translocates protons. V-ATPase is responsible for acidifying and maintaining the pH of intracellular compartments and in some cell types, is targeted to the plasma membrane, where it is responsible for acidifying the extracellular environment. Required for assembly and activity of the vacuolar ATPase. Regulates the size of gut granules during embryonic development. In neurons, required for necrotic cell death by promoting intracellular acidification. Required for cell death induced by hypoxia. Required for acidification of synaptic vesicles and the release of neurotransmitters from adult neurons. The polypeptide is V-type proton ATPase 116 kDa subunit a 1 (Caenorhabditis elegans).